The following is a 115-amino-acid chain: Large ribosomal subunit protein mL60 (115 aa).

A mitochondrion-targeting transit peptide spans M1–L23. The segment at A88 to F115 is disordered. The span at W103–F115 shows a compositional bias: polar residues.

Belongs to the mitochondrion-specific ribosomal protein mL60 family. In terms of assembly, component of the mitochondrial large ribosomal subunit (mt-LSU). Mature yeast 74S mitochondrial ribosomes consist of a small (37S) and a large (54S) subunit. The 37S small subunit contains a 15S ribosomal RNA (15S mt-rRNA) and at least 32 different proteins. The 54S large subunit contains a 21S rRNA (21S mt-rRNA) and at least 45 different proteins.

Its subcellular location is the mitochondrion. Its function is as follows. Component of the mitochondrial ribosome (mitoribosome), a dedicated translation machinery responsible for the synthesis of mitochondrial genome-encoded proteins, including at least some of the essential transmembrane subunits of the mitochondrial respiratory chain. The mitoribosomes are attached to the mitochondrial inner membrane and translation products are cotranslationally integrated into the membrane. The polypeptide is Large ribosomal subunit protein mL60 (mrpl31) (Schizosaccharomyces pombe (strain 972 / ATCC 24843) (Fission yeast)).